Here is a 613-residue protein sequence, read N- to C-terminus: Chaperone protein dnaK (613 aa).

The protein belongs to the heat shock protein 70 family.

Its subcellular location is the plastid. The protein localises to the chloroplast. Functionally, acts as a chaperone. In Phaeodactylum tricornutum (strain CCAP 1055/1), this protein is Chaperone protein dnaK.